The primary structure comprises 517 residues: Glycerol kinase (517 aa).

Residue Thr24 participates in ADP binding. ATP-binding residues include Thr24, Thr25, and Ser26. Thr24 is a sn-glycerol 3-phosphate binding site. Arg28 contacts ADP. Sn-glycerol 3-phosphate contacts are provided by Arg94, Glu95, Tyr146, and Asp261. 5 residues coordinate glycerol: Arg94, Glu95, Tyr146, Asp261, and Gln262. Positions 283 and 327 each coordinate ADP. Positions 283, 327, 331, and 428 each coordinate ATP. Residues Gly428 and Asn432 each coordinate ADP.

It belongs to the FGGY kinase family.

It catalyses the reaction glycerol + ATP = sn-glycerol 3-phosphate + ADP + H(+). It participates in polyol metabolism; glycerol degradation via glycerol kinase pathway; sn-glycerol 3-phosphate from glycerol: step 1/1. Inhibited by fructose 1,6-bisphosphate (FBP). Its function is as follows. Key enzyme in the regulation of glycerol uptake and metabolism. Catalyzes the phosphorylation of glycerol to yield sn-glycerol 3-phosphate. In Mycobacterium tuberculosis (strain ATCC 25177 / H37Ra), this protein is Glycerol kinase.